A 166-amino-acid polypeptide reads, in one-letter code: Crossover junction endodeoxyribonuclease RuvC (166 aa).

Catalysis depends on residues Asp9, Glu70, and Asp144. Positions 9, 70, and 144 each coordinate Mg(2+).

Belongs to the RuvC family. In terms of assembly, homodimer which binds Holliday junction (HJ) DNA. The HJ becomes 2-fold symmetrical on binding to RuvC with unstacked arms; it has a different conformation from HJ DNA in complex with RuvA. In the full resolvosome a probable DNA-RuvA(4)-RuvB(12)-RuvC(2) complex forms which resolves the HJ. The cofactor is Mg(2+).

The protein localises to the cytoplasm. It carries out the reaction Endonucleolytic cleavage at a junction such as a reciprocal single-stranded crossover between two homologous DNA duplexes (Holliday junction).. Its function is as follows. The RuvA-RuvB-RuvC complex processes Holliday junction (HJ) DNA during genetic recombination and DNA repair. Endonuclease that resolves HJ intermediates. Cleaves cruciform DNA by making single-stranded nicks across the HJ at symmetrical positions within the homologous arms, yielding a 5'-phosphate and a 3'-hydroxyl group; requires a central core of homology in the junction. The consensus cleavage sequence is 5'-(A/T)TT(C/G)-3'. Cleavage occurs on the 3'-side of the TT dinucleotide at the point of strand exchange. HJ branch migration catalyzed by RuvA-RuvB allows RuvC to scan DNA until it finds its consensus sequence, where it cleaves and resolves the cruciform DNA. The protein is Crossover junction endodeoxyribonuclease RuvC of Neorickettsia sennetsu (strain ATCC VR-367 / Miyayama) (Ehrlichia sennetsu).